We begin with the raw amino-acid sequence, 332 residues long: Protein FAM131B (332 aa).

Positions 1-22 (MDSTSSLHGSSLHRPSTEQTRT) are disordered. Phosphoserine is present on serine 47. The interval 95-114 (PTIQPQHSHEAVRRDTDAYS) is disordered. Residues 101–111 (HSHEAVRRDTD) show a composition bias toward basic and acidic residues. 2 positions are modified to phosphoserine: serine 114 and serine 117. Residues 221-332 (LGPAFDDSQP…FDEEEGDANN (112 aa)) are disordered. Composition is skewed to basic and acidic residues over residues 272–281 (PVEEEKRPLA) and 288–302 (AGCR…REDP). A phosphoserine mark is found at serine 295, serine 297, and serine 313. Threonine 316 carries the phosphothreonine modification. A phosphoserine mark is found at serine 317, serine 318, and serine 322. Acidic residues predominate over residues 323 to 332 (FDEEEGDANN).

Belongs to the FAM131 family.

The sequence is that of Protein FAM131B (Fam131b) from Mus musculus (Mouse).